We begin with the raw amino-acid sequence, 127 residues long: Large ribosomal subunit protein bL12 (127 aa).

The protein belongs to the bacterial ribosomal protein bL12 family. Homodimer. Part of the ribosomal stalk of the 50S ribosomal subunit. Forms a multimeric L10(L12)X complex, where L10 forms an elongated spine to which 2 to 4 L12 dimers bind in a sequential fashion. Binds GTP-bound translation factors.

Forms part of the ribosomal stalk which helps the ribosome interact with GTP-bound translation factors. Is thus essential for accurate translation. This Nitratiruptor sp. (strain SB155-2) protein is Large ribosomal subunit protein bL12.